A 188-amino-acid polypeptide reads, in one-letter code: Probable manganese efflux pump MntP (188 aa).

Transmembrane regions (helical) follow at residues 3–23, 66–86, 106–128, 143–163, and 168–188; these read ITATVLLAFGMSMDAFAASIG, LEWNHWIAFVLLIFLGGRMII, WLLVTTAIATSLDAMAVGVGLAF, ATLIMSTLGMMVGRFIGSIIG, and ILGGLVLIGIGVQILWTHFHG.

It belongs to the MntP (TC 9.B.29) family.

The protein localises to the cell inner membrane. Functionally, probably functions as a manganese efflux pump. The polypeptide is Probable manganese efflux pump MntP (Escherichia coli O139:H28 (strain E24377A / ETEC)).